The following is a 752-amino-acid chain: MWNALQDRDSAEVLGHRQRWLRVGTLVLALTGTFLIGFLFGWFIKPSNEATGNVSHSGMKKEFLHELKAENIKKFLYNFTRTPHLAGTQNNFELAKQIHDQWKEFGLDLVELSHYDVLLSYPNKTHPNYISIINEDGNEIFKTSLSEQPPPGYENISDVVPPYSAFSPQGTPEGDLVYVNYARTEDFFKLEREMKISCSGKIVIARYGKVFRGNMVKNAQLAGAKGMILYSDPADYFVPAVKSYPDGWNLPGGGVQRGNVLNLNGAGDPLTPGYPANEHAYRHELTNAVGLPSIPVHPIGYDDAQKLLEHMGGPAPPDSSWKGGLKVPYNVGPGFAGNFSTQKVKMHIHSYTKVTRIYNVIGTLKGALEPDRYVILGGHRDAWVFGGIDPQSGAAVVHEIVRSFGTLKKKGRRPRRTILFASWDAEEFGLLGSTEWAEEHSRLLQERGVAYINADSSIEGNYTLRVDCTPLMYSLVYNLTKELQSPDEGFEGKSLYDSWKEKSPSPEFIGMPRISKLGSGNDFEVFFQRLGIASGRARYTKNWKTNKVSSYPLYHSVYETYELVVKFYDPTFKYHLTVAQVRGAMVFELANSIVLPFDCQSYAVALKKYADTIYNISMKHPQEMKAYMISFDSLFSAVNNFTDVASKFNQRLQELDKSNPILLRIMNDQLMYLERAFIDPLGLPGRPFYRHIIYAPSSHNKYAGESFPGIYDALFDISSKVNASKAWNEVKRQISIATFTVQAAAETLREVA.

Topologically, residues 1–22 (MWNALQDRDSAEVLGHRQRWLR) are cytoplasmic. Ser-10 is subject to Phosphoserine. The chain crosses the membrane as a helical; Signal-anchor for type II membrane protein span at residues 23 to 44 (VGTLVLALTGTFLIGFLFGWFI). Residues 45–752 (KPSNEATGNV…AAAETLREVA (708 aa)) are Extracellular-facing. Residues Asn-78, Asn-123, and Asn-155 are each glycosylated (N-linked (GlcNAc...) asparagine). 2 residues coordinate substrate: Arg-212 and Asn-259. 2 residues coordinate Ca(2+): Thr-271 and Tyr-274. Residues 276–589 (ANEHAYRHEL…QVRGAMVFEL (314 aa)) form an NAALADase region. A glycan (N-linked (GlcNAc...) asparagine) is linked at Asn-338. Residues His-379 and Asp-389 each contribute to the Zn(2+) site. Glu-426 is a binding site for substrate. The active-site Nucleophile; for NAALADase activity is Glu-426. Glu-427 provides a ligand contact to Zn(2+). Glu-435 and Glu-438 together coordinate Ca(2+). Asp-455 is a binding site for Zn(2+). 2 N-linked (GlcNAc...) asparagine glycosylation sites follow: Asn-461 and Asn-478. Substrate contacts are provided by residues 519–520 (SG), Asn-521, 536–538 (RAR), Tyr-554, and 554–555 (YH). Residue His-555 coordinates Zn(2+). N-linked (GlcNAc...) asparagine glycosylation is present at Asn-615. The active-site Charge relay system is Ser-630. Asn-640 carries an N-linked (GlcNAc...) asparagine glycan. Active-site charge relay system residues include Asp-668 and His-691. 701–702 (KY) provides a ligand contact to substrate. Residue Asn-722 is glycosylated (N-linked (GlcNAc...) asparagine).

The protein belongs to the peptidase M28 family. M28B subfamily. As to quaternary structure, homodimer. It depends on Zn(2+) as a cofactor. In terms of tissue distribution, expressed predominantly in the hippocampal region of the brain and in kidney. Lower levels in the ovary, testis and mandibular gland.

Its subcellular location is the cell membrane. The catalysed reaction is Release of an unsubstituted, C-terminal glutamyl residue, typically from Ac-Asp-Glu or folylpoly-gamma-glutamates.. Its activity is regulated as follows. The NAALADase and folate hydrolase activities are inhibited by quisqualic acid. Its function is as follows. Has both folate hydrolase and N-acetylated-alpha-linked-acidic dipeptidase (NAALADase) activity. Has a preference for tri-alpha-glutamate peptides. In the intestine, required for the uptake of folate. In the brain, modulates excitatory neurotransmission through the hydrolysis of the neuropeptide, N-aceylaspartylglutamate (NAAG), thereby releasing glutamate. Functionally, also exhibits a dipeptidyl-peptidase IV type activity. In vitro, cleaves Gly-Pro-AMC. This is Glutamate carboxypeptidase 2 (Folh1) from Mus musculus (Mouse).